A 275-amino-acid polypeptide reads, in one-letter code: Calcyphosin (275 aa).

The disordered stretch occupies residues P59–M87. EF-hand domains lie at S107–V142, L143–Q178, A179–P214, and T222–S258. Positions 120, 122, 124, 126, 131, 156, 158, 160, 162, 167, 192, 194, 196, and 203 each coordinate Ca(2+). S126 carries the post-translational modification Phosphoserine; by PKA.

Monomer. Does not form oligomers in the presence of calcium.

Its subcellular location is the cytoplasm. Its function is as follows. Calcium-binding protein. May play a role in cellular signaling events (Potential). This chain is Calcyphosin, found in Homo sapiens (Human).